Here is a 441-residue protein sequence, read N- to C-terminus: MSIDSLDMEARGVGRLLNEDGTPGKVIFVEGALPGETVSYRSFRRKPSYEQAHLVEVRQESVMRVKPGCQHFGVCGGCSMQHLDSRAQLAIKQRVLEDNLWHLSKVKPDVVFRPIAGPDWGYRYRARLTVRHVAKKGGVLVGFHERKSSYVADMTRCEILPPHVSAMLVPLRELVGGLSIRDRMPQIELAVGQEVTALVLRILEPLTDADKDLLRAFADQHKVQFWLQPKGPDTVYPFYPADAELAYTLPEFGIRMPFKPTDFTQVNHQINRVLIGRALRLLDAQPQDRLLDLFCGIGNFTLPLATQGKSVMGIEGSEALTTRALANAEYNGLAARTEFACRNLFEVTAEDIAALGRFDRWLVDPPREGALAVCKALGELAQQGSNVLPQRIVYVSCSPATLARDAGLLVHGAGYRLAGAGVVNMFPHTSHVESIAVFERG.

A TRAM domain is found at 1–56; the sequence is MSIDSLDMEARGVGRLLNEDGTPGKVIFVEGALPGETVSYRSFRRKPSYEQAHLVE. Cysteine 69, cysteine 75, cysteine 78, and cysteine 157 together coordinate [4Fe-4S] cluster. S-adenosyl-L-methionine-binding residues include glutamine 265, phenylalanine 294, asparagine 299, glutamate 315, asparagine 343, and aspartate 364. The Nucleophile role is filled by cysteine 397.

It belongs to the class I-like SAM-binding methyltransferase superfamily. RNA M5U methyltransferase family. RlmD subfamily.

The catalysed reaction is uridine(1939) in 23S rRNA + S-adenosyl-L-methionine = 5-methyluridine(1939) in 23S rRNA + S-adenosyl-L-homocysteine + H(+). Its function is as follows. Catalyzes the formation of 5-methyl-uridine at position 1939 (m5U1939) in 23S rRNA. This chain is 23S rRNA (uracil(1939)-C(5))-methyltransferase RlmD, found in Cupriavidus necator (strain ATCC 17699 / DSM 428 / KCTC 22496 / NCIMB 10442 / H16 / Stanier 337) (Ralstonia eutropha).